Consider the following 519-residue polypeptide: Chaperone SurA (519 aa).

The signal sequence occupies residues 1–31 (MMRSLHSLRRMSGTVLALMLAAGLPLSAAQA). Composition is skewed to low complexity over residues 31-45 (AQPA…QKPA) and 197-207 (PAAAQATRAPA). Disordered stretches follow at residues 31–50 (AQPA…PAPS) and 196–221 (NPAA…PAQS). In terms of domain architecture, PpiC 1 spans 223 to 324 (PAMLVLAQIL…NGFHILKVVD (102 aa)). Residues 328-361 (GGQPAQAARPAPAPAPQQPSSFQEGPSVAAPQGP) form a disordered region. Positions 364-463 (VTQTHARHIL…FGWHLIQVLE (100 aa)) constitute a PpiC 2 domain.

Its subcellular location is the periplasm. It catalyses the reaction [protein]-peptidylproline (omega=180) = [protein]-peptidylproline (omega=0). Its function is as follows. Chaperone involved in the correct folding and assembly of outer membrane proteins. Recognizes specific patterns of aromatic residues and the orientation of their side chains, which are found more frequently in integral outer membrane proteins. May act in both early periplasmic and late outer membrane-associated steps of protein maturation. This chain is Chaperone SurA, found in Bordetella bronchiseptica (strain ATCC BAA-588 / NCTC 13252 / RB50) (Alcaligenes bronchisepticus).